Reading from the N-terminus, the 308-residue chain is GTPase Era (308 aa).

Residues 9 to 179 (RAGFVALIGE…RAWLGASLPE (171 aa)) form the Era-type G domain. The segment at 17–24 (GEPNAGKS) is G1. Residue 17–24 (GEPNAGKS) coordinates GTP. The interval 43-47 (QTTRA) is G2. The interval 64-67 (DTPG) is G3. GTP-binding positions include 64 to 68 (DTPGL) and 129 to 132 (NKID). The tract at residues 129 to 132 (NKID) is G4. Residues 158–160 (ISA) are G5. The 78-residue stretch at 210-287 (LHQELPYQLT…HLFLQVKVRP (78 aa)) folds into the KH type-2 domain.

Belongs to the TRAFAC class TrmE-Era-EngA-EngB-Septin-like GTPase superfamily. Era GTPase family. Monomer.

It localises to the cytoplasm. Its subcellular location is the cell inner membrane. In terms of biological role, an essential GTPase that binds both GDP and GTP, with rapid nucleotide exchange. Plays a role in 16S rRNA processing and 30S ribosomal subunit biogenesis and possibly also in cell cycle regulation and energy metabolism. The chain is GTPase Era from Dinoroseobacter shibae (strain DSM 16493 / NCIMB 14021 / DFL 12).